We begin with the raw amino-acid sequence, 674 residues long: ATP-citrate synthase subunit 1 (674 aa).

Positions 1-10 (MPSATSTNGA) are enriched in low complexity. Residues 1–26 (MPSATSTNGANGNGNGNGASASPAPG) are disordered. ATP is bound by residues 261 to 281 (LLRY…EVGG) and 312 to 338 (FKTE…KNKS). Glutamate 278 is a binding site for Mg(2+). Histidine 320 serves as the catalytic Tele-phosphohistidine intermediate. Residue 339 to 349 (MREAGFYVPDT) participates in CoA binding.

The protein belongs to the succinate/malate CoA ligase alpha subunit family. As to quaternary structure, composed of two subunits.

It is found in the cytoplasm. The catalysed reaction is oxaloacetate + acetyl-CoA + ADP + phosphate = citrate + ATP + CoA. Catalyzes the formation of cytosolic acetyl-CoA, which is mainly used for the biosynthesis of fatty acids and sterols. The chain is ATP-citrate synthase subunit 1 (ACL1) from Sordaria macrospora (strain ATCC MYA-333 / DSM 997 / K(L3346) / K-hell).